Here is a 488-residue protein sequence, read N- to C-terminus: Germacrene A hydroxylase (488 aa).

Topologically, residues 1 to 6 are cytoplasmic; it reads MEVSLT. The chain crosses the membrane as a helical; Signal-anchor for type II membrane protein span at residues 7–23; the sequence is TSIALATIVFFLYKLLT. The Lumenal segment spans residues 24-488; sequence RPTSSKNRLP…KTELMLVPSF (465 aa). Asn169, Asn260, Asn379, and Asn412 each carry an N-linked (GlcNAc...) asparagine glycan. Position 432 (Cys432) interacts with heme.

It belongs to the cytochrome P450 family. Heme is required as a cofactor. In terms of tissue distribution, expressed in leaf primordia.

The protein resides in the endoplasmic reticulum membrane. It carries out the reaction (+)-(R)-germacrene A + 3 reduced [NADPH--hemoprotein reductase] + 3 O2 = germacra-1(10),4,11(13)-trien-12-oate + 3 oxidized [NADPH--hemoprotein reductase] + 4 H2O + 4 H(+). It functions in the pathway secondary metabolite biosynthesis; terpenoid biosynthesis. In terms of biological role, involved in the biosynthesis of germacrene-derived sesquiterpene lactones. Catalyzes three consecutive oxidations of germacrene A to produce germacrene A acid. Could also catalyze the three-step oxidation of non-natural substrate amorphadiene to artemisinic acid. In Helianthus annuus (Common sunflower), this protein is Germacrene A hydroxylase.